Reading from the N-terminus, the 311-residue chain is ATP synthase subunit a (311 aa).

6 consecutive transmembrane segments (helical) span residues 62-82 (AVHV…GFFM), 123-143 (VAPM…MDLI), 179-199 (VTVF…WGFI), 213-233 (FWYF…VALI), 253-273 (IFIL…LGGI), and 276-296 (FGWA…FMVL).

This sequence belongs to the ATPase A chain family. As to quaternary structure, F-type ATPases have 2 components, CF(1) - the catalytic core - and CF(0) - the membrane proton channel. CF(1) has five subunits: alpha(3), beta(3), gamma(1), delta(1), epsilon(1). CF(0) has three main subunits: a(1), b(2) and c(9-12). The alpha and beta chains form an alternating ring which encloses part of the gamma chain. CF(1) is attached to CF(0) by a central stalk formed by the gamma and epsilon chains, while a peripheral stalk is formed by the delta and b chains.

The protein resides in the cell inner membrane. Its function is as follows. Key component of the proton channel; it plays a direct role in the translocation of protons across the membrane. The polypeptide is ATP synthase subunit a (Teredinibacter turnerae (strain ATCC 39867 / T7901)).